The chain runs to 224 residues: MFPKINTIDPYISLRLFEVKPKYVGYSSVDARNQSFAIHDIKNYEKFSNAGLFYTSPTEITCYCCGMKFCNWLYEKHPLQVHAFWSRNCGFMRATLGIIGLKKMIDSYNDYYNNEVFVKHKNRVYTHKRLEDMGFSKPFMQFILANAFIPPYRKYIHKIILNDRYFTFKFAAHLLSFHKVNLDNQTTYCMTCGIEPIKKDENFCNACKTLNYKHYKTLNFSVKL.

The stretch at 29 to 92 (VDARNQSFAI…AFWSRNCGFM (64 aa)) is one BIR repeat. Zn(2+)-binding residues include C62, C65, H82, and C89.

The protein belongs to the asfivirus IAP family. As to quaternary structure, interacts with subunit p17 of host CASP3.

The protein resides in the host cytoplasm. The protein localises to the virion. In terms of biological role, prevents apoptosis of host cell by inhibiting caspase-3/CASP3 activation to promote the viral replication. Also induces the activation of host NF-kappaB. In African swine fever virus (isolate Tick/South Africa/Wildebeeslaagte M1/1996) (ASFV), this protein is Inhibitor of apoptosis protein (p27).